Here is a 523-residue protein sequence, read N- to C-terminus: 2,3-bisphosphoglycerate-independent phosphoglycerate mutase (523 aa).

Mn(2+) is bound by residues Asp-13 and Ser-63. Residue Ser-63 is the Phosphoserine intermediate of the active site. Substrate contacts are provided by residues His-124, 156 to 157 (RD), Arg-188, Arg-194, 268 to 271 (RSDR), and Lys-341. Asp-408, His-412, Asp-449, His-450, and His-467 together coordinate Mn(2+).

Belongs to the BPG-independent phosphoglycerate mutase family. In terms of assembly, monomer. Mn(2+) serves as cofactor.

The catalysed reaction is (2R)-2-phosphoglycerate = (2R)-3-phosphoglycerate. The protein operates within carbohydrate degradation; glycolysis; pyruvate from D-glyceraldehyde 3-phosphate: step 3/5. In terms of biological role, catalyzes the interconversion of 2-phosphoglycerate and 3-phosphoglycerate. The sequence is that of 2,3-bisphosphoglycerate-independent phosphoglycerate mutase from Salinibacter ruber (strain DSM 13855 / M31).